A 263-amino-acid chain; its full sequence is Sulfur carrier protein FdhD (263 aa).

The Cysteine persulfide intermediate role is filled by cysteine 107.

It belongs to the FdhD family.

Its subcellular location is the cytoplasm. Required for formate dehydrogenase (FDH) activity. Acts as a sulfur carrier protein that transfers sulfur from IscS to the molybdenum cofactor prior to its insertion into FDH. The chain is Sulfur carrier protein FdhD from Geobacillus kaustophilus (strain HTA426).